We begin with the raw amino-acid sequence, 460 residues long: 3'3'-cGAMP-specific phosphodiesterase 3 (460 aa).

An HD domain is found at 28-189; the sequence is PPEHCIRCCW…IPLFSRIALL (162 aa). Residues 260–455 enclose the HD-GYP domain; the sequence is DDAYLECIVT…LPDEYTQLPH (196 aa). Residues histidine 317 and aspartate 318 each contribute to the a divalent metal cation site. Lysine 321 functions as the Proton donor in the catalytic mechanism. A divalent metal cation contacts are provided by histidine 346, histidine 370, histidine 371, and aspartate 399.

As to quaternary structure, monomer. Requires Mn(2+) as cofactor.

It catalyses the reaction 3',3'-cGAMP + H2O = 5'-pApG-3' + H(+). Its function is as follows. Phosphodiesterase (PDE) that catalyzes the hydrolysis of 3'3'-cyclic GMP-AMP (3'3'-cGAMP), leading to linear 5'-pApG. Counteracts the function of the 3'3'-cGAMP synthase DncV, and is involved in the modulation of intracellular 3'3'-cGAMP levels. Enhances bacterial chemotaxis and inhibits intestinal colonization in vivo. Thus exerts a crucial role in regulating bacterial infectivity through catalyzing 3'3'-cGAMP degradation. Is specific for 3'3'-cGAMP since it cannot degrade other cGAMP linkage isomers (3'2'-, 2'3'-, and 2'2'-cGAMPs); is also able to hydrolyze c-di-GMP but not c-di-AMP. The chain is 3'3'-cGAMP-specific phosphodiesterase 3 from Vibrio cholerae serotype O1 (strain ATCC 39315 / El Tor Inaba N16961).